A 489-amino-acid chain; its full sequence is Metalloreductase STEAP2 (489 aa).

NADP(+) contacts are provided by residues 37–40 (SGDF), 59–60 (SR), 92–99 (IHREHYTS), asparagine 117, and alanine 150. Tryptophan 151 and aspartate 159 together coordinate FAD. Residues 207-227 (LFTLWRGPVVVAISLATFFFL) form a helical membrane-spanning segment. Tyrosine 228 is a binding site for Fe(3+). The chain crosses the membrane as a helical span at residues 258 to 278 (LPIVAITLLSLVYLAGLLAAA). Residues 258–406 (LPIVAITLLS…LGYVALLITT (149 aa)) enclose the Ferric oxidoreductase domain. The FAD site is built by glutamine 280 and arginine 301. 4 helical membrane passes run 304–324 (LGLLSFFFAVVHVAYSLCLPM), 358–378 (MYISFGIMSLGLLSLLAVTSI), 392–412 (FIQSTLGYVALLITTFHVLIY), and 431–451 (FVLALVLPSIVILGKMILLLP). Histidine 315 is a heme b binding site. Position 318 (tyrosine 318) interacts with Fe(3+). FAD-binding residues include serine 377 and glutamine 394. Histidine 408 is a heme b binding site. Serine 482 is subject to Phosphoserine.

Belongs to the STEAP family. FAD serves as cofactor. Heme b is required as a cofactor.

It localises to the cell membrane. Its subcellular location is the endosome membrane. The enzyme catalyses 2 Fe(2+) + NADP(+) + H(+) = 2 Fe(3+) + NADPH. It carries out the reaction 2 Cu(+) + NADP(+) + H(+) = 2 Cu(2+) + NADPH. In terms of biological role, integral membrane protein that functions as a NADPH-dependent ferric-chelate reductase, using NADPH from one side of the membrane to reduce a Fe(3+) chelate that is bound on the other side of the membrane. Mediates sequential transmembrane electron transfer from NADPH to FAD and onto heme, and finally to the Fe(3+) chelate. Can also reduce Cu(2+) to Cu(1+). In Mus musculus (Mouse), this protein is Metalloreductase STEAP2 (Steap2).